The sequence spans 745 residues: MTSNFSSTVAGLPRIGAKRELKFALEGYWNGSIEGRELAQTARQLVNTASDSLSGLDSVPFAGRSYYDAMLDTAAILGVLPERFDDIADHENDGLPLWIDRYFGAARGTETLPAQAMTKWFDTNYHYLVPELSADTRFVLDASALIEDLRCQQVRGVNARPVLVGPLTFLSLARTTDGSNPLDHLPALFEVYERLIKSFDTEWVQIDEPALVTDVAPEVLEQVRAGYTTLAKRDGVFVNTYFGSGDQALNTLAGIGLGAIGVDLVTHGVTELAAWKGEELLVAGIVDGRNIWRTDLCAALASLKRLAARGPIAVSTSCSLLHVPYTLEAENIEPEVRDWLAFGSEKITEVKLLADALAGNIDAAAFDAASAAIASRRTSPRTAPITQELPGRSRGSFDTRVTLQEKSLELPALPTTTIGSFPQTPSIRSARARLRKESITLEQYEEAMREEIDLVIAKQEELGLDVLVHGEPERNDMVQYFSELLDGFLSTANGWVQSYGSRCVRPPVLFGNVSRPAPMTVKWFQYAQSLTQKHVKGMLTGPVTILAWSFVRDDQPLATTADQVALALRDEINDLIEAGAKIIQVDEPAIRELLPLRDVDKPAYLQWSVDSFRLATAGAPDDVQIHTHMCYSEFNEVISSVIALDADVTTIEAARSDMQVLAALKSSGFELGVGPGVWDIHSPRVPSAQEVDGLLEAALQSVDPRQLWVNPDCGLKTRGWPEVEASLKVLVESAKQAREKIGATI.

Residues 19–22 (RELK) and K119 contribute to the 5-methyltetrahydropteroyltri-L-glutamate site. Residues 418-420 (IGS) and E471 contribute to the L-homocysteine site. L-methionine contacts are provided by residues 418–420 (IGS) and E471. 5-methyltetrahydropteroyltri-L-glutamate-binding positions include 502-503 (RC) and W548. Position 586 (D586) interacts with L-homocysteine. D586 provides a ligand contact to L-methionine. E592 provides a ligand contact to 5-methyltetrahydropteroyltri-L-glutamate. Residues H628, C630, and E652 each coordinate Zn(2+). The active-site Proton donor is H681. Residue C713 participates in Zn(2+) binding.

It belongs to the vitamin-B12 independent methionine synthase family. Requires Zn(2+) as cofactor.

It catalyses the reaction 5-methyltetrahydropteroyltri-L-glutamate + L-homocysteine = tetrahydropteroyltri-L-glutamate + L-methionine. The protein operates within amino-acid biosynthesis; L-methionine biosynthesis via de novo pathway; L-methionine from L-homocysteine (MetE route): step 1/1. In terms of biological role, catalyzes the transfer of a methyl group from 5-methyltetrahydrofolate to homocysteine resulting in methionine formation. This Corynebacterium glutamicum (strain ATCC 13032 / DSM 20300 / JCM 1318 / BCRC 11384 / CCUG 27702 / LMG 3730 / NBRC 12168 / NCIMB 10025 / NRRL B-2784 / 534) protein is 5-methyltetrahydropteroyltriglutamate--homocysteine methyltransferase.